Here is a 229-residue protein sequence, read N- to C-terminus: 2-phytyl-1,4-naphtoquinone methyltransferase (229 aa).

It belongs to the class I-like SAM-binding methyltransferase superfamily. MenG/UbiE family.

The catalysed reaction is demethylphylloquinol + S-adenosyl-L-methionine = phylloquinol + S-adenosyl-L-homocysteine + H(+). It participates in cofactor biosynthesis; phylloquinone biosynthesis. Its function is as follows. Methyltransferase required for the conversion of 2-phytyl-1,4-beta-naphthoquinol to phylloquinol. This is 2-phytyl-1,4-naphtoquinone methyltransferase from Trichormus variabilis (strain ATCC 29413 / PCC 7937) (Anabaena variabilis).